A 462-amino-acid chain; its full sequence is MERYDRQLRLWGALGQDSLNRSRVCVVGPATPLLQEVFKNLVLAGISSLTWLKVECAVQSGSLFLAELKKDLEPLASKQLEYEENDLRKTLQQPQYDWTRFSVVILTCIGEQTAMLDLNEIRRQRGTKFPPVLNTFVSGFYGYIYLVLSETHFVLQAHPDSKKYDLRLQNPWPELINYVDTFDLSKMDTATFSGIPYTVLLMKCIAKLERDGNNGRITIDQMKKVLDQICLPLGNDVIYEPNYVEAKRYAYLACSQNDCCKELEDLLRNLEISDYGNDWHDTYNYEILTLLLTLKNIAKENGELSFQPLTGTLPDMESTTENYIRLKKLYEVKAKLDKSRVEESLARSKKIVSQDVLETFCSHYGEVRKILPPKSDLLGIFSTSNALLDALVMVQFWEQPAVTAEDKDEFIGLRVDDNYSVMAFFGGAVVQEAIKLITHHYVPIDNLFLYNGINNSSATYKI.

Belongs to the ubiquitin-activating E1 family. ULA1 subfamily. As to quaternary structure, heterodimer of UBA3 and ULA1. The complex binds NEDD8 and UBC12.

Its pathway is protein modification; protein neddylation. Functionally, regulatory subunit of the dimeric UBA3-ULA1 E1 enzyme. E1 activates NEDD8/RUB1 by first adenylating its C-terminal glycine residue with ATP, thereafter linking this residue to the side chain of the catalytic cysteine, yielding a NEDD8-UBA3 thioester and free AMP. E1 finally transfers NEDD8 to the catalytic cysteine of UBC12. This Saccharomyces cerevisiae (strain ATCC 204508 / S288c) (Baker's yeast) protein is NEDD8-activating enzyme E1 regulatory subunit (ULA1).